Consider the following 466-residue polypeptide: DNA polymerase delta subunit 3 (466 aa).

Ala2 bears the N-acetylalanine mark. 2 disordered regions span residues 145-218 and 255-466; these read PAES…KEVM and EQEV…FQRK. 3 stretches are compositionally biased toward basic and acidic residues: residues 205–218, 255–265, and 281–297; these read DANKETKTEAKEVM, EQEVKEEKKVE, and DLKKSSKKAEPVRMQQK. Residue Lys259 forms a Glycyl lysine isopeptide (Lys-Gly) (interchain with G-Cter in SUMO); alternate linkage. A Glycyl lysine isopeptide (Lys-Gly) (interchain with G-Cter in SUMO2); alternate cross-link involves residue Lys259. Lys262 participates in a covalent cross-link: Glycyl lysine isopeptide (Lys-Gly) (interchain with G-Cter in SUMO2). At Ser308 the chain carries Phosphoserine. Pro residues predominate over residues 350 to 360; that stretch reads PSPPPPSPSPE. Phosphoserine is present on residues Ser407 and Ser409. At Thr411 the chain carries Phosphothreonine. Ser413 bears the Phosphoserine mark. Basic and acidic residues predominate over residues 432–441; it reads VKKEPKEERK. Lys433 participates in a covalent cross-link: Glycyl lysine isopeptide (Lys-Gly) (interchain with G-Cter in SUMO); alternate. A Glycyl lysine isopeptide (Lys-Gly) (interchain with G-Cter in SUMO2); alternate cross-link involves residue Lys433. Positions 456–463 match the PIP-box motif; it reads QVAITGFF.

Component of both the DNA polymerase delta and DNA polymerase zeta complexes. The tetrameric DNA polymerase delta complex (Pol-delta4), which consists of POLD1/p125, POLD2/p50, POLD3/p66/p68 and POLD4/p12, with POLD1 bearing DNA polymerase and 3' to 5' proofreading exonuclease activities. Within this complex, directly interacts with POLD2. Following stress caused by DNA damaging agents or by replication stress, POLD4 is degraded and Pol-delta4 is converted into a trimeric form of the complex (Pol-delta3), which consists of POLD1, POLD2 and POLD3. Pol-delta3 is the major form occurring at S phase replication sites, as well as DNA damage sites. Directly interacts with PCNA, as do POLD1 and POLD4; this interaction stimulates Pol-delta polymerase activity. Component of the DNA polymerase zeta complex (POLZ), which consists of REV3L, MAD2L2, POLD2 and POLD3, with REV3L bearing DNA polymerase catalytic activity. The DNA polymerase delta complex interacts with POLDIP2; this interaction is probably mediated through direct binding to POLD2. Ubiquitinated, but not targeted to the proteasome. Sumoylated. Sumoylation by SUMO3 may be predominant.

Its subcellular location is the cytoplasm. The protein resides in the nucleus. Its function is as follows. Accessory component of both the DNA polymerase delta complex and the DNA polymerase zeta complex. As a component of the trimeric and tetrameric DNA polymerase delta complexes (Pol-delta3 and Pol-delta4, respectively), plays a role in high fidelity genome replication, including in lagging strand synthesis, and repair. Required for optimal Pol-delta activity. Stabilizes the Pol-delta complex and plays a major role in Pol-delta stimulation by PCNA. Pol-delta3 and Pol-delta4 are characterized by the absence or the presence of POLD4. They exhibit differences in catalytic activity. Most notably, Pol-delta3 shows higher proofreading activity than Pol-delta4. Although both Pol-delta3 and Pol-delta4 process Okazaki fragments in vitro, Pol-delta3 may also be better suited to fulfill this task, exhibiting near-absence of strand displacement activity compared to Pol-delta4 and stalling on encounter with the 5'-blocking oligonucleotides. Pol-delta3 idling process may avoid the formation of a gap, while maintaining a nick that can be readily ligated. Along with DNA polymerase kappa, DNA polymerase delta carries out approximately half of nucleotide excision repair (NER) synthesis following UV irradiation. In this context, POLD3, along with PCNA and RFC1-replication factor C complex, is required to recruit POLD1, the catalytic subunit of the polymerase delta complex, to DNA damage sites. Under conditions of DNA replication stress, required for the repair of broken replication forks through break-induced replication (BIR). Involved in the translesion synthesis (TLS) of templates carrying O6-methylguanine or abasic sites performed by Pol-delta4, independently of DNA polymerase zeta (REV3L) or eta (POLH). Facilitates abasic site bypass by DNA polymerase delta by promoting extension from the nucleotide inserted opposite the lesion. Also involved in TLS, as a component of the tetrameric DNA polymerase zeta complex. Along with POLD2, dramatically increases the efficiency and processivity of DNA synthesis of the DNA polymerase zeta complex compared to the minimal zeta complex, consisting of only REV3L and REV7. This is DNA polymerase delta subunit 3 (POLD3) from Bos taurus (Bovine).